A 725-amino-acid chain; its full sequence is Catalase-peroxidase (725 aa).

A cross-link (tryptophyl-tyrosyl-methioninium (Trp-Tyr) (with M-237)) is located at residues 88 to 211; it reads WHSAGTYRIQ…LAASEMGLIY (124 aa). Residue His-89 is the Proton acceptor of the active site. Positions 211–237 form a cross-link, tryptophyl-tyrosyl-methioninium (Tyr-Met) (with W-88); the sequence is YVNPEGPGREPDPLKAAQQIRETFKRM. Residue His-252 participates in heme b binding.

Belongs to the peroxidase family. Peroxidase/catalase subfamily. In terms of assembly, homodimer or homotetramer. Requires heme b as cofactor. Post-translationally, formation of the three residue Trp-Tyr-Met cross-link is important for the catalase, but not the peroxidase activity of the enzyme.

The catalysed reaction is H2O2 + AH2 = A + 2 H2O. It catalyses the reaction 2 H2O2 = O2 + 2 H2O. Its function is as follows. Bifunctional enzyme with both catalase and broad-spectrum peroxidase activity. In Symbiobacterium thermophilum (strain DSM 24528 / JCM 14929 / IAM 14863 / T), this protein is Catalase-peroxidase.